Here is a 906-residue protein sequence, read N- to C-terminus: Protein translocase subunit SecA (906 aa).

Residues Q89, 107-111 (GEGKT), and D502 each bind ATP. Residues C890, C892, C901, and H902 each coordinate Zn(2+).

It belongs to the SecA family. In terms of assembly, monomer and homodimer. Part of the essential Sec protein translocation apparatus which comprises SecA, SecYEG and auxiliary proteins SecDF-YajC and YidC. It depends on Zn(2+) as a cofactor.

The protein resides in the cell inner membrane. It is found in the cytoplasm. It carries out the reaction ATP + H2O + cellular proteinSide 1 = ADP + phosphate + cellular proteinSide 2.. Part of the Sec protein translocase complex. Interacts with the SecYEG preprotein conducting channel. Has a central role in coupling the hydrolysis of ATP to the transfer of proteins into and across the cell membrane, serving both as a receptor for the preprotein-SecB complex and as an ATP-driven molecular motor driving the stepwise translocation of polypeptide chains across the membrane. This Brucella canis (strain ATCC 23365 / NCTC 10854 / RM-666) protein is Protein translocase subunit SecA.